The sequence spans 265 residues: Keratinocyte-associated transmembrane protein 2 (265 aa).

The signal sequence occupies residues 1-49 (MAAAALKRMRGPAQAKLLPGSAIQALVGLARPLVLALLLVSAALSSVVS). Residues 50-196 (RTDSPSPTVL…MPSSNIEEED (147 aa)) lie on the Extracellular side of the membrane. A compositionally biased stretch (polar residues) spans 72–96 (THENQTKPSISQISTTLPPTMSTEK). 2 disordered regions span residues 72–123 (THEN…EDPS) and 135–168 (SPST…SDDT). Asparagine 75 carries an N-linked (GlcNAc...) asparagine glycan. Residues 114 to 123 (EEADNNEDPS) show a composition bias toward acidic residues. The helical transmembrane segment at 197-217 (SHFFFHLIIFAFCIAVVYITY) threads the bilayer. Over 218-265 (HNKRKIFLLVQSRKWRDGLCSKTVEYHRLDQNVNEAMPSLKITNDYTF) the chain is Cytoplasmic. Residues serine 229 and serine 256 each carry the phosphoserine modification.

The protein resides in the membrane. In Pongo abelii (Sumatran orangutan), this protein is Keratinocyte-associated transmembrane protein 2 (KCT2).